Here is a 368-residue protein sequence, read N- to C-terminus: Peptide chain release factor 2 (368 aa).

An N5-methylglutamine modification is found at glutamine 251.

Belongs to the prokaryotic/mitochondrial release factor family. In terms of processing, methylated by PrmC. Methylation increases the termination efficiency of RF2.

The protein localises to the cytoplasm. In terms of biological role, peptide chain release factor 2 directs the termination of translation in response to the peptide chain termination codons UGA and UAA. The protein is Peptide chain release factor 2 of Nitratiruptor sp. (strain SB155-2).